We begin with the raw amino-acid sequence, 660 residues long: Phosphatidylinositol-3-phosphate phosphatase MTMR7 (660 aa).

Residues 126–504 form the Myotubularin phosphatase domain; it reads GWLLVDLSEE…FTYKFWNGMY (379 aa). Residues asparagine 250, asparagine 275, and isoleucine 276 each coordinate a 1,2-diacyl-sn-glycero-3-phospho-(1D-myo-inositol-3-phosphate). Catalysis depends on cysteine 338, which acts as the Phosphocysteine intermediate. A 1,2-diacyl-sn-glycero-3-phospho-(1D-myo-inositol-3-phosphate)-binding residues include serine 339, aspartate 340, glycine 341, tryptophan 342, aspartate 343, arginine 344, and arginine 384. The stretch at 514-548 forms a coiled coil; sequence RQSVTDYLMAVKEESQQLEEELESLEERLEKIQKV. The tract at residues 550 to 660 is disordered; sequence LHGTKVKSKQ…DSDEAVFLTA (111 aa). The segment covering 566 to 596 has biased composition (polar residues); that stretch reads SGFSTSDHSTANTPQDYSGNSKSFPSRSPSQ. Threonine 578 carries the phosphothreonine modification. The segment covering 641–653 has biased composition (basic and acidic residues); it reads APSEDSGKDRDSD.

It belongs to the protein-tyrosine phosphatase family. Non-receptor class myotubularin subfamily. As to quaternary structure, heterodimer (via C-terminus) with MTMR9 (via coiled coil domain); the interaction enhances MTMR7 catalytic activity. Does not homodimerize. Interacts with RAB1B (in GDP-bound form). Highly expressed in brain (at protein level). Expressed at low levels in liver, kidney and testis.

The protein resides in the cytoplasm. The protein localises to the endomembrane system. The catalysed reaction is a 1,2-diacyl-sn-glycero-3-phospho-(1D-myo-inositol-3-phosphate) + H2O = a 1,2-diacyl-sn-glycero-3-phospho-(1D-myo-inositol) + phosphate. It catalyses the reaction 1D-myo-inositol 1,3-bisphosphate + H2O = 1D-myo-inositol 1-phosphate + phosphate. With respect to regulation, interaction with MTMR9 increases phosphatase activity. Its function is as follows. Lipid phosphatase that specifically dephosphorylates the D-3 position of phosphatidylinositol 3-phosphate (PtdIns(3)P) and inositol 1,3-bisphosphate (Ins(1,3)P2). This Mus musculus (Mouse) protein is Phosphatidylinositol-3-phosphate phosphatase MTMR7.